A 60-amino-acid polypeptide reads, in one-letter code: Large ribosomal subunit protein bL32 (60 aa).

The interval 1-60 (MAVQQNKKSRSARDMRRSHDALSENALSVEKTTGEVHLRHHVSPEGVYRGRKVVDKGADE) is disordered. Over residues 11 to 22 (SARDMRRSHDAL) the composition is skewed to basic and acidic residues.

This sequence belongs to the bacterial ribosomal protein bL32 family.

This is Large ribosomal subunit protein bL32 from Pseudomonas putida (strain ATCC 700007 / DSM 6899 / JCM 31910 / BCRC 17059 / LMG 24140 / F1).